Consider the following 174-residue polypeptide: Recombination protein RecR (174 aa).

The C4-type zinc finger occupies 30-45 (CNACRTFTEEEECTIC). The 96-residue stretch at 54–149 (GQLCIVEMPE…KVTRIAHGIP (96 aa)) folds into the Toprim domain.

Belongs to the RecR family.

In terms of biological role, may play a role in DNA repair. It seems to be involved in an RecBC-independent recombinational process of DNA repair. It may act with RecF and RecO. This is Recombination protein RecR from Haemophilus ducreyi (strain 35000HP / ATCC 700724).